The following is a 295-amino-acid chain: NAD kinase (295 aa).

Aspartate 72 serves as the catalytic Proton acceptor. Residues aspartate 72–glycine 73, asparagine 146–aspartate 147, arginine 157, lysine 174, aspartate 176, threonine 187–serine 192, and glutamine 247 contribute to the NAD(+) site.

The protein belongs to the NAD kinase family. A divalent metal cation is required as a cofactor.

It is found in the cytoplasm. The catalysed reaction is NAD(+) + ATP = ADP + NADP(+) + H(+). Involved in the regulation of the intracellular balance of NAD and NADP, and is a key enzyme in the biosynthesis of NADP. Catalyzes specifically the phosphorylation on 2'-hydroxyl of the adenosine moiety of NAD to yield NADP. This chain is NAD kinase, found in Ectopseudomonas mendocina (strain ymp) (Pseudomonas mendocina).